Here is a 345-residue protein sequence, read N- to C-terminus: Phenylalanine--tRNA ligase alpha subunit (345 aa).

Position 253 (Glu253) interacts with Mg(2+).

It belongs to the class-II aminoacyl-tRNA synthetase family. Phe-tRNA synthetase alpha subunit type 1 subfamily. Tetramer of two alpha and two beta subunits. Mg(2+) is required as a cofactor.

It localises to the cytoplasm. It carries out the reaction tRNA(Phe) + L-phenylalanine + ATP = L-phenylalanyl-tRNA(Phe) + AMP + diphosphate + H(+). This Lawsonia intracellularis (strain PHE/MN1-00) protein is Phenylalanine--tRNA ligase alpha subunit.